A 1320-amino-acid chain; its full sequence is Bifunctional protein PutA (1320 aa).

The tract at residues 228-574 is proline dehydrogenase; sequence LSRSLNRIIG…SFVNRIADAT (347 aa). Residues 653 to 1119 are aldehyde dehydrogenase; it reads QPVADGEMTP…LAHRPPNALN (467 aa). Active-site residues include E883 and C917.

The protein in the N-terminal section; belongs to the proline dehydrogenase family. This sequence in the C-terminal section; belongs to the aldehyde dehydrogenase family. Requires FAD as cofactor.

The enzyme catalyses L-proline + a quinone = (S)-1-pyrroline-5-carboxylate + a quinol + H(+). It catalyses the reaction L-glutamate 5-semialdehyde + NAD(+) + H2O = L-glutamate + NADH + 2 H(+). The protein operates within amino-acid degradation; L-proline degradation into L-glutamate; L-glutamate from L-proline: step 1/2. Its pathway is amino-acid degradation; L-proline degradation into L-glutamate; L-glutamate from L-proline: step 2/2. Oxidizes proline to glutamate for use as a carbon and nitrogen source and also function as a transcriptional repressor of the put operon. In Salmonella typhimurium (strain LT2 / SGSC1412 / ATCC 700720), this protein is Bifunctional protein PutA (putA).